Consider the following 295-residue polypeptide: Inositol monophosphatase 1 (295 aa).

Positions 73, 92, 94, 95, and 231 each coordinate Mg(2+). Glutamate 73 lines the substrate pocket. Substrate is bound by residues 94–97 (IDGT) and aspartate 231.

Belongs to the inositol monophosphatase superfamily. Mg(2+) is required as a cofactor.

It is found in the cytoplasm. It localises to the nucleus. The enzyme catalyses a myo-inositol phosphate + H2O = myo-inositol + phosphate. Its pathway is polyol metabolism; myo-inositol biosynthesis; myo-inositol from D-glucose 6-phosphate: step 2/2. With respect to regulation, inhibited by Li(+) and Na(+). In terms of biological role, responsible for the provision of inositol required for synthesis of phosphatidylinositol and polyphosphoinositides. The sequence is that of Inositol monophosphatase 1 (INM1) from Saccharomyces cerevisiae (strain ATCC 204508 / S288c) (Baker's yeast).